Consider the following 283-residue polypeptide: Pantothenate synthetase (283 aa).

30–37 provides a ligand contact to ATP; sequence MGNLHDAH. The active-site Proton donor is the histidine 37. Glutamine 61 contacts (R)-pantoate. Residue glutamine 61 coordinates beta-alanine. 149–152 is an ATP binding site; sequence GVKD. Glutamine 155 provides a ligand contact to (R)-pantoate. Residues valine 178 and 186 to 189 each bind ATP; that span reads MSSR.

It belongs to the pantothenate synthetase family. In terms of assembly, homodimer.

The protein localises to the cytoplasm. The enzyme catalyses (R)-pantoate + beta-alanine + ATP = (R)-pantothenate + AMP + diphosphate + H(+). The protein operates within cofactor biosynthesis; (R)-pantothenate biosynthesis; (R)-pantothenate from (R)-pantoate and beta-alanine: step 1/1. Functionally, catalyzes the condensation of pantoate with beta-alanine in an ATP-dependent reaction via a pantoyl-adenylate intermediate. The chain is Pantothenate synthetase from Cellvibrio japonicus (strain Ueda107) (Pseudomonas fluorescens subsp. cellulosa).